The following is a 422-amino-acid chain: 5-hydroxytryptamine receptor 1A (422 aa).

Residues 1 to 23 (MDVLSPGQGNNTTSPPAPFETGG) are disordered. Topologically, residues 1 to 38 (MDVLSPGQGNNTTSPPAPFETGGNTTGISDVTFSYQVI) are extracellular. N-linked (GlcNAc...) asparagine glycans are attached at residues N10, N11, and N24. Residues 39-59 (TSLLLGTLIFCAVLGNACVVA) form a helical membrane-spanning segment. Residues 60–73 (AIALERSLQNVANY) are Cytoplasmic-facing. A helical transmembrane segment spans residues 74–98 (LIGSLAVTDLMVSVLVLPMAALYQV). At 99 to 107 (LNKWTLGQV) the chain is on the extracellular side. A helical transmembrane segment spans residues 108-132 (TCDLFIALDVLCCTSSILHLCAIAL). The cysteines at positions 109 and 187 are disulfide-linked. Serotonin-binding residues include D116 and C120. The DRY motif; important for ligand-induced conformation changes motif lies at 133–135 (DRY). The Cytoplasmic portion of the chain corresponds to 133 to 152 (DRYWAITDPIDYVNKRTPRR). A helical membrane pass occupies residues 153 to 174 (AAALISLTWLIGFLISIPPMLG). Residues 175–193 (WRTPEDRSDPDACTISKDH) lie on the Extracellular side of the membrane. Residues 194 to 216 (GYTIYSTFGAFYIPLLLMLVLYG) form a helical membrane-spanning segment. Residues 217–346 (RIFRAARFRI…LARERKTVKT (130 aa)) lie on the Cytoplasmic side of the membrane. The disordered stretch occupies residues 235 to 263 (KTGADTHHGASPAPQPKKSVNGESGSRNW). The 1D-myo-inositol 4-phosphate site is built by T314, K345, T346, and G352. The chain crosses the membrane as a helical span at residues 347-370 (LGIIMGTFILCWLPFFIVALVLPF). At 371 to 378 (CESSCHMP) the chain is on the extracellular side. Residues 379–403 (TLLGAIINWLGYSNSLLNPVIYAYF) form a helical membrane-spanning segment. The NPxxY motif; important for ligand-induced conformation changes and signaling motif lies at 396-400 (NPVIY). Positions 403, 404, and 405 each coordinate 1D-myo-inositol 4-phosphate. Topologically, residues 404–422 (NKDFQNAFKKIIKCKFCRQ) are cytoplasmic.

The protein belongs to the G-protein coupled receptor 1 family. 5-hydroxytryptamine receptor subfamily. HTR1A sub-subfamily. Heterodimer; heterodimerizes with GPER1. Interacts with YIF1B. Interacts with GPR39 and GALR1.

It localises to the cell membrane. It is found in the cell projection. Its subcellular location is the dendrite. Its activity is regulated as follows. G-protein coupled receptor activity is regulated by lipids: phosphatidylinositol 4-phosphate increases HTR1A-mediated activity. Its function is as follows. G-protein coupled receptor for 5-hydroxytryptamine (serotonin). Also functions as a receptor for various drugs and psychoactive substances. Ligand binding causes a conformation change that triggers signaling via guanine nucleotide-binding proteins (G proteins) and modulates the activity of downstream effectors, such as adenylate cyclase. HTR1A is coupled to G(i)/G(o) G alpha proteins and mediates inhibitory neurotransmission: signaling inhibits adenylate cyclase activity and activates a phosphatidylinositol-calcium second messenger system that regulates the release of Ca(2+) ions from intracellular stores. Beta-arrestin family members regulate signaling by mediating both receptor desensitization and resensitization processes. The chain is 5-hydroxytryptamine receptor 1A (HTR1A) from Pongo pygmaeus (Bornean orangutan).